We begin with the raw amino-acid sequence, 428 residues long: Glutamyl-tRNA reductase (428 aa).

Substrate contacts are provided by residues 55–58 (TCNR), Ser-114, 119–121 (ETQ), and Gln-125. The Nucleophile role is filled by Cys-56. Residue 194 to 199 (GAGEMI) coordinates NADP(+).

It belongs to the glutamyl-tRNA reductase family. In terms of assembly, homodimer.

The enzyme catalyses (S)-4-amino-5-oxopentanoate + tRNA(Glu) + NADP(+) = L-glutamyl-tRNA(Glu) + NADPH + H(+). Its pathway is porphyrin-containing compound metabolism; protoporphyrin-IX biosynthesis; 5-aminolevulinate from L-glutamyl-tRNA(Glu): step 1/2. Functionally, catalyzes the NADPH-dependent reduction of glutamyl-tRNA(Glu) to glutamate 1-semialdehyde (GSA). The sequence is that of Glutamyl-tRNA reductase from Paraburkholderia phytofirmans (strain DSM 17436 / LMG 22146 / PsJN) (Burkholderia phytofirmans).